We begin with the raw amino-acid sequence, 205 residues long: Holliday junction branch migration complex subunit RuvA (205 aa).

Positions 1-64 are domain I; the sequence is MIGKLKGTID…EDQLKLFGFL (64 aa). A domain II region spans residues 65 to 143; sequence SALEREWFRL…AFSGEMAPSI (79 aa). The segment at 144–153 is flexible linker; it reads GLKQELGEGV. Residues 153 to 205 are domain III; sequence VAAAPVADAVSALTNLGYSRDQAANAVAAALKNGGEGGDSAKLIRLGLKELSR.

The protein belongs to the RuvA family. Homotetramer. Forms an RuvA(8)-RuvB(12)-Holliday junction (HJ) complex. HJ DNA is sandwiched between 2 RuvA tetramers; dsDNA enters through RuvA and exits via RuvB. An RuvB hexamer assembles on each DNA strand where it exits the tetramer. Each RuvB hexamer is contacted by two RuvA subunits (via domain III) on 2 adjacent RuvB subunits; this complex drives branch migration. In the full resolvosome a probable DNA-RuvA(4)-RuvB(12)-RuvC(2) complex forms which resolves the HJ.

It localises to the cytoplasm. Functionally, the RuvA-RuvB-RuvC complex processes Holliday junction (HJ) DNA during genetic recombination and DNA repair, while the RuvA-RuvB complex plays an important role in the rescue of blocked DNA replication forks via replication fork reversal (RFR). RuvA specifically binds to HJ cruciform DNA, conferring on it an open structure. The RuvB hexamer acts as an ATP-dependent pump, pulling dsDNA into and through the RuvAB complex. HJ branch migration allows RuvC to scan DNA until it finds its consensus sequence, where it cleaves and resolves the cruciform DNA. This Rhizobium meliloti (strain 1021) (Ensifer meliloti) protein is Holliday junction branch migration complex subunit RuvA.